Reading from the N-terminus, the 523-residue chain is Inosine-5'-monophosphate dehydrogenase 2 (523 aa).

CBS domains follow at residues 121-183 (FINN…VQDV) and 184-240 (MTKN…PLAS). NAD(+) contacts are provided by residues 278-280 (DSS) and 328-330 (GMG). K(+) is bound by residues G330 and G332. Residue S333 participates in IMP binding. C335 is a K(+) binding site. The Thioimidate intermediate role is filled by C335. IMP is bound by residues 368-370 (DGG), 391-392 (GG), and 415-419 (YRGMG). R437 functions as the Proton acceptor in the catalytic mechanism. Q449 contacts IMP. K(+) is bound by residues E508, G509, and G510.

This sequence belongs to the IMPDH/GMPR family. Homotetramer. Seems to be able to form heterotetramers composed from more than 1 of the 3 IMPDH gene products (IMD2-4). K(+) is required as a cofactor.

The protein localises to the cytoplasm. It carries out the reaction IMP + NAD(+) + H2O = XMP + NADH + H(+). Its pathway is purine metabolism; XMP biosynthesis via de novo pathway; XMP from IMP: step 1/1. With respect to regulation, mycophenolic acid (MPA) is a non-competitive inhibitor that prevents formation of the closed enzyme conformation by binding to the same site as the amobile flap. In contrast, mizoribine monophosphate (MZP) is a competitive inhibitor that induces the closed conformation. MPA is a potent inhibitor of mammalian IMPDHs but a poor inhibitor of the bacterial enzymes. MZP is a more potent inhibitor of bacterial IMPDH. In terms of biological role, catalyzes the conversion of inosine 5'-phosphate (IMP) to xanthosine 5'-phosphate (XMP), the first committed and rate-limiting step in the de novo synthesis of guanine nucleotides, and therefore plays an important role in the regulation of cell growth. In contrast to the other IMPDH alleles IMD3 and IMD4, the enzymatic activity of IMD2 seems to be intrinsically drug resistant. The polypeptide is Inosine-5'-monophosphate dehydrogenase 2 (Saccharomyces cerevisiae (strain ATCC 204508 / S288c) (Baker's yeast)).